The sequence spans 525 residues: Peptide chain release factor 3 (525 aa).

One can recognise a tr-type G domain in the interval Ala-9 to Gln-276. GTP contacts are provided by residues Ser-18 to Thr-25, Asp-86 to His-90, and Asn-140 to Asp-143.

This sequence belongs to the TRAFAC class translation factor GTPase superfamily. Classic translation factor GTPase family. PrfC subfamily.

It is found in the cytoplasm. Increases the formation of ribosomal termination complexes and stimulates activities of RF-1 and RF-2. It binds guanine nucleotides and has strong preference for UGA stop codons. It may interact directly with the ribosome. The stimulation of RF-1 and RF-2 is significantly reduced by GTP and GDP, but not by GMP. The sequence is that of Peptide chain release factor 3 from Francisella tularensis subsp. holarctica (strain FTNF002-00 / FTA).